The following is a 148-amino-acid chain: Gag-Pol polyprotein (148 aa).

One can recognise an Integrase catalytic domain in the interval 1–64 (IPYNPQSQGV…SAGERIIDII (64 aa)). A Mg(2+)-binding site is contributed by Glu12. Positions 83 to 130 (FRVYYRDSRDPIWKGPAKLLWKGEGAVVIQDNSDIKVVPRRKVKIIRD) form a DNA-binding region, integrase-type.

Homotetramer; may further associate as a homohexadecamer. Part of the pre-integration complex (PIC) which is composed of viral genome, matrix protein, Vpr and integrase. Interacts with human SMARCB1/INI1 and human PSIP1/LEDGF isoform 1. Interacts with human KPNA3; this interaction might play a role in nuclear import of the pre-integration complex. Interacts with human NUP153; this interaction might play a role in nuclear import of the pre-integration complex. In terms of processing, specific enzymatic cleavages by the viral protease yield mature proteins.

Its function is as follows. Catalyzes viral DNA integration into the host chromosome, by performing a series of DNA cutting and joining reactions. This enzyme activity takes place after virion entry into a cell and reverse transcription of the RNA genome in dsDNA. The first step in the integration process is 3' processing. This step requires a complex comprising the viral genome, matrix protein, Vpr and integrase. This complex is called the pre-integration complex (PIC). The integrase protein removes 2 nucleotides from each 3' end of the viral DNA, leaving recessed CA OH's at the 3' ends. In the second step, the PIC enters cell nucleus. This process is mediated through integrase and Vpr proteins, and allows the virus to infect a non dividing cell. This ability to enter the nucleus is specific of lentiviruses, other retroviruses cannot and rely on cell division to access cell chromosomes. In the third step, termed strand transfer, the integrase protein joins the previously processed 3' ends to the 5' ends of strands of target cellular DNA at the site of integration. The 5'-ends are produced by integrase-catalyzed staggered cuts, 5 bp apart. A Y-shaped, gapped, recombination intermediate results, with the 5'-ends of the viral DNA strands and the 3' ends of target DNA strands remaining unjoined, flanking a gap of 5 bp. The last step is viral DNA integration into host chromosome. This involves host DNA repair synthesis in which the 5 bp gaps between the unjoined strands are filled in and then ligated. Since this process occurs at both cuts flanking the HIV genome, a 5 bp duplication of host DNA is produced at the ends of HIV-1 integration. Alternatively, Integrase may catalyze the excision of viral DNA just after strand transfer, this is termed disintegration. This is Gag-Pol polyprotein (gag-pol) from Homo sapiens (Human).